The sequence spans 286 residues: Fructose-bisphosphate aldolase (286 aa).

S50 is a binding site for D-glyceraldehyde 3-phosphate. Residue D85 is the Proton donor of the active site. The Zn(2+) site is built by H86, D107, E137, and H181. G182 is a binding site for dihydroxyacetone phosphate. H209 contributes to the Zn(2+) binding site. Dihydroxyacetone phosphate-binding positions include 210 to 212 (GGT) and 231 to 234 (NVNT).

This sequence belongs to the class II fructose-bisphosphate aldolase family. Zn(2+) serves as cofactor.

It catalyses the reaction beta-D-fructose 1,6-bisphosphate = D-glyceraldehyde 3-phosphate + dihydroxyacetone phosphate. The protein operates within carbohydrate degradation; glycolysis; D-glyceraldehyde 3-phosphate and glycerone phosphate from D-glucose: step 4/4. Catalyzes the aldol condensation of dihydroxyacetone phosphate (DHAP or glycerone-phosphate) with glyceraldehyde 3-phosphate (G3P) to form fructose 1,6-bisphosphate (FBP) in gluconeogenesis and the reverse reaction in glycolysis. This Staphylococcus aureus (strain MSSA476) protein is Fructose-bisphosphate aldolase (fba).